The following is a 187-amino-acid chain: Putative protein YbeM (187 aa).

Residues 1 to 163 enclose the CN hydrolase domain; that stretch reads MMTTILTIHV…PALIMAEVTP (163 aa).

Belongs to the carbon-nitrogen hydrolase superfamily. NIT1/NIT2 family.

Pseudogene resulting from a nucleotide deletion that introduces a premature stop codon at position 66. This is the C-terminal fragment. The intact protein (AC A0A140NCB4) hydrolyzes deaminated glutathione (dGSH, 2-oxoglutaramate) to alpha-ketoglutarate (alpha-KG) and cysteinylglycine, has less activity against alpha-ketoglutaramate (a-KGM) and no activity on glutathione or L-glutamine. May function as a metabolite repair enzyme. The polypeptide is Putative protein YbeM (ybeM) (Escherichia coli (strain K12)).